Consider the following 908-residue polypeptide: 26S proteasome non-ATPase regulatory subunit 2 (908 aa).

An N-acetylmethionine modification is found at M1. Residues 1-52 (MEEGGRDKAPVQPQQSPAAALGGTDEKPSGKERRDAGDKDKEQELSEEDKQL) are disordered. The segment covering 10–20 (PVQPQQSPAAA) has biased composition (low complexity). At S16 the chain carries Phosphoserine. T24 bears the Phosphothreonine mark. Positions 24–52 (TDEKPSGKERRDAGDKDKEQELSEEDKQL) are enriched in basic and acidic residues. S29 and S147 each carry phosphoserine. The residue at position 194 (Y194) is a Phosphotyrosine. A phosphoserine mark is found at S361 and S363. PC repeat units lie at residues 409–442 (SAAASLGMILLWDVDGGLTQIDKYLYSSEDYIKS), 443–479 (GALLACGIVNSGVRNECDPALALLSDYVLHNSNTMRL), 480–514 (GSIFGLGLAYAGSNREDVLTLLLPVMGDSKSSMEV), 517–551 (VTALACGMIAVGSCNGDVTSTILQTIMEKSETELK), and 560–589 (LGLGLNHLGKGEAIEAILAALEVVSEPFRS). K551 carries the post-translational modification N6-acetyllysine. The segment covering 623–643 (KEKEEDKDKKEKKDKDKKEAP) has biased composition (basic and acidic residues). The tract at residues 623-645 (KEKEEDKDKKEKKDKDKKEAPAD) is disordered. 2 PC repeats span residues 692–723 (LALALISVSNPRLNILDTLSKFSHDADPEVSY) and 742–757 (AAMLRQLAQYHAKDPN). A required for interaction with UBLCP1 region spans residues 708–903 (DTLSKFSHDA…LEGFVILRKN (196 aa)).

This sequence belongs to the proteasome subunit S2 family. As to quaternary structure, component of the 19S proteasome regulatory particle complex. The 26S proteasome consists of a 20S core particle (CP) and two 19S regulatory subunits (RP). The regulatory particle is made of a lid composed of 9 subunits, a base containing 6 ATPases and few additional components including PSMD2. Interacts with RPGRIP1L. Interacts with CRY1 in a KDM8-dependent manner. Interacts (via C-terminus) with phosphatase UBLCP1 (via ubiquitin-like domain); the interaction recruits UBLCP1 to the 19S regulatory particle where it dephosphorylates 19S subunit PSMC2/RPT1 which impairs PSMC2 ATPase activity and disrupts 26S proteasome assembly.

In terms of biological role, component of the 26S proteasome, a multiprotein complex involved in the ATP-dependent degradation of ubiquitinated proteins. This complex plays a key role in the maintenance of protein homeostasis by removing misfolded or damaged proteins, which could impair cellular functions, and by removing proteins whose functions are no longer required. Therefore, the proteasome participates in numerous cellular processes, including cell cycle progression, apoptosis, or DNA damage repair. Its function is as follows. Binds to the intracellular domain of tumor necrosis factor type 1 receptor. The binding domain of TRAP1 and TRAP2 resides outside the death domain of TNFR1. This Pongo abelii (Sumatran orangutan) protein is 26S proteasome non-ATPase regulatory subunit 2 (PSMD2).